We begin with the raw amino-acid sequence, 360 residues long: Photosystem II protein D1 3 (360 aa).

3 consecutive transmembrane segments (helical) span residues 29–46 (YVGWFGVLMIPTLLAATV), 118–133 (HFLIGCACYLGRQWEL), and 142–156 (WICVAYSAPLASATA). His118 lines the chlorophyll a pocket. A pheophytin a-binding site is contributed by Tyr126. Residues Asp170 and Glu189 each contribute to the [CaMn4O5] cluster site. A helical transmembrane segment spans residues 197 to 218 (FHMLGVAGVFGGSLFSAMHGSL). Position 198 (His198) interacts with chlorophyll a. A quinone-binding positions include His215 and 264 to 265 (SF). Residue His215 coordinates Fe cation. Position 272 (His272) interacts with Fe cation. The chain crosses the membrane as a helical span at residues 274–288 (FLAAWPVIGIWFTAL). [CaMn4O5] cluster is bound by residues His332, Glu333, Asp342, and Ala344. Residues 345–360 (AGEVAPVALTAPAING) constitute a propeptide that is removed on maturation.

It belongs to the reaction center PufL/M/PsbA/D family. As to quaternary structure, PSII is composed of 1 copy each of membrane proteins PsbA, PsbB, PsbC, PsbD, PsbE, PsbF, PsbH, PsbI, PsbJ, PsbK, PsbL, PsbM, PsbT, PsbX, PsbY, PsbZ, Psb30/Ycf12, peripheral proteins PsbO, CyanoQ (PsbQ), PsbU, PsbV and a large number of cofactors. It forms dimeric complexes. The D1/D2 heterodimer binds P680, chlorophylls that are the primary electron donor of PSII, and subsequent electron acceptors. It shares a non-heme iron and each subunit binds pheophytin, quinone, additional chlorophylls, carotenoids and lipids. D1 provides most of the ligands for the Mn4-Ca-O5 cluster of the oxygen-evolving complex (OEC). There is also a Cl(-1) ion associated with D1 and D2, which is required for oxygen evolution. The PSII complex binds additional chlorophylls, carotenoids and specific lipids. is required as a cofactor. In terms of processing, tyr-161 forms a radical intermediate that is referred to as redox-active TyrZ, YZ or Y-Z. Post-translationally, C-terminally processed by CtpA; processing is essential to allow assembly of the oxygen-evolving complex and thus photosynthetic growth.

The protein resides in the cellular thylakoid membrane. It catalyses the reaction 2 a plastoquinone + 4 hnu + 2 H2O = 2 a plastoquinol + O2. Functionally, photosystem II (PSII) is a light-driven water:plastoquinone oxidoreductase that uses light energy to abstract electrons from H(2)O, generating O(2) and a proton gradient subsequently used for ATP formation. It consists of a core antenna complex that captures photons, and an electron transfer chain that converts photonic excitation into a charge separation. The D1/D2 (PsbA/PsbD) reaction center heterodimer binds P680, the primary electron donor of PSII as well as several subsequent electron acceptors. In Trichormus variabilis (strain ATCC 29413 / PCC 7937) (Anabaena variabilis), this protein is Photosystem II protein D1 3.